Reading from the N-terminus, the 558-residue chain is Inositol-3-phosphate synthase (558 aa).

The tract at residues 1–34 (MSPTALDACDHHDSFSLPAQDQSKVHPSARRTPE) is disordered. Positions 99, 100, 101, 102, 174, 210, 211, 221, 224, 262, 263, 264, 265, 313, 314, 338, 341, 372, 373, 374, 387, 439, 440, 468, and 469 each coordinate NAD(+).

This sequence belongs to the myo-inositol 1-phosphate synthase family. As to quaternary structure, homotetramer. NAD(+) is required as a cofactor.

It is found in the cytoplasm. The catalysed reaction is D-glucose 6-phosphate = 1D-myo-inositol 3-phosphate. The protein operates within polyol metabolism; myo-inositol biosynthesis; myo-inositol from D-glucose 6-phosphate: step 1/2. Key enzyme in myo-inositol biosynthesis pathway that catalyzes the conversion of glucose 6-phosphate to 1-myo-inositol 1-phosphate in a NAD-dependent manner. Rate-limiting enzyme in the synthesis of all inositol-containing compounds. The chain is Inositol-3-phosphate synthase from Cryptococcus neoformans var. grubii serotype A (strain H99 / ATCC 208821 / CBS 10515 / FGSC 9487) (Filobasidiella neoformans var. grubii).